The primary structure comprises 73 residues: Translation initiation factor IF-1 (73 aa).

The region spanning 1 to 73 (MAKKDGAIEV…SRGRIVYRYK (73 aa)) is the S1-like domain.

The protein belongs to the IF-1 family. As to quaternary structure, component of the 30S ribosomal translation pre-initiation complex which assembles on the 30S ribosome in the order IF-2 and IF-3, IF-1 and N-formylmethionyl-tRNA(fMet); mRNA recruitment can occur at any time during PIC assembly.

It localises to the cytoplasm. Functionally, one of the essential components for the initiation of protein synthesis. Stabilizes the binding of IF-2 and IF-3 on the 30S subunit to which N-formylmethionyl-tRNA(fMet) subsequently binds. Helps modulate mRNA selection, yielding the 30S pre-initiation complex (PIC). Upon addition of the 50S ribosomal subunit IF-1, IF-2 and IF-3 are released leaving the mature 70S translation initiation complex. The sequence is that of Translation initiation factor IF-1 from Mycobacterium avium (strain 104).